A 471-amino-acid polypeptide reads, in one-letter code: Kynurenine 3-monooxygenase (471 aa).

FAD-binding positions include Val-19, 37 to 40 (YESR), and Ala-57. L-kynurenine-binding residues include Arg-85 and Tyr-99. FAD is bound by residues Arg-111, Leu-136, Thr-172, Asp-304, and 317 to 318 (MN). Asn-363 and Tyr-398 together coordinate L-kynurenine. 2 helical membrane passes run 385 to 404 (CLHT…VTFS) and 425 to 445 (ALFF…TGPT).

The protein belongs to the aromatic-ring hydroxylase family. KMO subfamily. Requires FAD as cofactor.

Its subcellular location is the mitochondrion outer membrane. It catalyses the reaction L-kynurenine + NADPH + O2 + H(+) = 3-hydroxy-L-kynurenine + NADP(+) + H2O. It participates in cofactor biosynthesis; NAD(+) biosynthesis; quinolinate from L-kynurenine: step 1/3. Catalyzes the hydroxylation of L-kynurenine (L-Kyn) to form 3-hydroxy-L-kynurenine (L-3OHKyn). Required for synthesis of quinolinic acid, a neurotoxic NMDA receptor antagonist and potential endogenous inhibitor of NMDA receptor signaling in axonal targeting, synaptogenesis and apoptosis during brain development. Quinolinic acid may also affect NMDA receptor signaling in pancreatic beta cells, osteoblasts, myocardial cells, and the gastrointestinal tract. In Sus scrofa (Pig), this protein is Kynurenine 3-monooxygenase.